Here is a 510-residue protein sequence, read N- to C-terminus: NAD(P)H-quinone oxidoreductase subunit 2 B, chloroplastic (510 aa).

13 helical membrane-spanning segments follow: residues 24-44 (LLLF…GLIL), 57-77 (LPWF…ALLF), 99-119 (IFQF…VEYI), 124-144 (MAIT…MFLC), 149-169 (LITI…LSGY), 183-203 (YLLM…WLYG), 227-247 (PGIS…LSPA), 295-315 (WHLL…IIAI), 323-343 (MLAY…IVGD), 354-374 (YMLF…LFGL), 395-415 (ALSL…AGFF), 428-448 (GLYS…YYYL), and 484-504 (MIVC…IIAI).

It belongs to the complex I subunit 2 family. NDH is composed of at least 16 different subunits, 5 of which are encoded in the nucleus.

It is found in the plastid. The protein resides in the chloroplast thylakoid membrane. It catalyses the reaction a plastoquinone + NADH + (n+1) H(+)(in) = a plastoquinol + NAD(+) + n H(+)(out). It carries out the reaction a plastoquinone + NADPH + (n+1) H(+)(in) = a plastoquinol + NADP(+) + n H(+)(out). Its function is as follows. NDH shuttles electrons from NAD(P)H:plastoquinone, via FMN and iron-sulfur (Fe-S) centers, to quinones in the photosynthetic chain and possibly in a chloroplast respiratory chain. The immediate electron acceptor for the enzyme in this species is believed to be plastoquinone. Couples the redox reaction to proton translocation, and thus conserves the redox energy in a proton gradient. This chain is NAD(P)H-quinone oxidoreductase subunit 2 B, chloroplastic, found in Jasminum nudiflorum (Winter jasmine).